Here is a 359-residue protein sequence, read N- to C-terminus: Histidinol-phosphate aminotransferase (359 aa).

Lys-217 carries the N6-(pyridoxal phosphate)lysine modification.

The protein belongs to the class-II pyridoxal-phosphate-dependent aminotransferase family. Histidinol-phosphate aminotransferase subfamily. Homodimer. Pyridoxal 5'-phosphate serves as cofactor.

The catalysed reaction is L-histidinol phosphate + 2-oxoglutarate = 3-(imidazol-4-yl)-2-oxopropyl phosphate + L-glutamate. It participates in amino-acid biosynthesis; L-histidine biosynthesis; L-histidine from 5-phospho-alpha-D-ribose 1-diphosphate: step 7/9. This chain is Histidinol-phosphate aminotransferase, found in Salmonella enteritidis PT4 (strain P125109).